The following is a 67-amino-acid chain: Large ribosomal subunit protein bL35 (67 aa).

Belongs to the bacterial ribosomal protein bL35 family.

The protein is Large ribosomal subunit protein bL35 of Sinorhizobium medicae (strain WSM419) (Ensifer medicae).